We begin with the raw amino-acid sequence, 488 residues long: Protein nucleotidyltransferase YdiU (488 aa).

ATP-binding residues include glycine 91, glycine 93, arginine 94, lysine 114, aspartate 126, glycine 127, arginine 177, and arginine 184. The active-site Proton acceptor is aspartate 253. The Mg(2+) site is built by asparagine 254 and aspartate 263. ATP is bound at residue aspartate 263.

The protein belongs to the SELO family. Mg(2+) serves as cofactor. The cofactor is Mn(2+).

The enzyme catalyses L-seryl-[protein] + ATP = 3-O-(5'-adenylyl)-L-seryl-[protein] + diphosphate. The catalysed reaction is L-threonyl-[protein] + ATP = 3-O-(5'-adenylyl)-L-threonyl-[protein] + diphosphate. It catalyses the reaction L-tyrosyl-[protein] + ATP = O-(5'-adenylyl)-L-tyrosyl-[protein] + diphosphate. It carries out the reaction L-histidyl-[protein] + UTP = N(tele)-(5'-uridylyl)-L-histidyl-[protein] + diphosphate. The enzyme catalyses L-seryl-[protein] + UTP = O-(5'-uridylyl)-L-seryl-[protein] + diphosphate. The catalysed reaction is L-tyrosyl-[protein] + UTP = O-(5'-uridylyl)-L-tyrosyl-[protein] + diphosphate. Nucleotidyltransferase involved in the post-translational modification of proteins. It can catalyze the addition of adenosine monophosphate (AMP) or uridine monophosphate (UMP) to a protein, resulting in modifications known as AMPylation and UMPylation. This chain is Protein nucleotidyltransferase YdiU, found in Bacillus cereus (strain G9842).